Here is a 224-residue protein sequence, read N- to C-terminus: MKRSKRYQSLCSLIEPKLYSPQEALKLLKKLATAKFVETAEAHIRLNLDPKYTDQQIRATVVLPHGTGKAIRIAVITKQSSHIEGADLVGSDDLCAQIAQSIINFDCLIATPDMMPTLAKLGKILGPRGLMPSPKSGTVTTNVAEAIQAFRRGQIEYRTDKTGIVHLAFGRMDFNEQHLYDNLVAIKESVETNKPSGASGLYWKSFAIATSMSPSIRLNIQQWS.

This sequence belongs to the universal ribosomal protein uL1 family. Part of the 50S ribosomal subunit.

The protein localises to the plastid. It localises to the chloroplast. Functionally, binds directly to 23S rRNA. Might be involved in E site tRNA release (Potential). The chain is Large ribosomal subunit protein uL1c (rpl1) from Cyanidioschyzon merolae (strain NIES-3377 / 10D) (Unicellular red alga).